The following is a 1015-amino-acid chain: Frequency clock protein (1015 aa).

Disordered regions lie at residues Met1–Asp138, Lys183–Asp285, Asp352–Ser383, His402–Arg465, Gly544–Ser614, Ser629–Lys668, Glu706–Ile728, and Ser895–Gly1015. Positions Ser49–Gly68 are enriched in low complexity. A compositionally biased stretch (basic and acidic residues) spans Glu69–Lys80. The segment covering Phe82–Ser95 has biased composition (polar residues). The span at Lys107–Pro117 shows a compositional bias: basic and acidic residues. Low complexity-rich tracts occupy residues Ser203–Lys216, Ser228–Ser267, and Gln356–Gln368. Residues Pro369–Ser383 show a composition bias toward polar residues. Residues Asn431–Asn442 are compositionally biased toward low complexity. Positions Pro443–Gln453 are enriched in pro residues. Residues Arg454 to Arg465 show a composition bias toward basic and acidic residues. Residues Thr556–Ser570 are compositionally biased toward polar residues. The Nuclear localization signal motif lies at His584–Lys588. Low complexity predominate over residues Gly590–Gly600. Over residues Ser629–Ser643 the composition is skewed to polar residues. Acidic residues-rich tracts occupy residues Ser895–Ser909 and Ser934–Ile946. Positions Gly976–Gly1003 are enriched in low complexity.

It belongs to the FRQ family.

The protein resides in the nucleus. Functionally, circadian clock component involved in the generation of biological rhythms, in particular in rhythm stability, period length, and temperature compensation. Behaves as a negative element in circadian transcriptional loop. This Trichoderma spinulosum (Hypocrea spinulosa) protein is Frequency clock protein (FRQ).